A 694-amino-acid polypeptide reads, in one-letter code: Elongation factor G (694 aa).

Residues Asp9 to Leu288 form the tr-type G domain. GTP-binding positions include Ala18–Thr25, Asp82–His86, and Asn136–Asp139.

It belongs to the TRAFAC class translation factor GTPase superfamily. Classic translation factor GTPase family. EF-G/EF-2 subfamily.

The protein resides in the cytoplasm. Functionally, catalyzes the GTP-dependent ribosomal translocation step during translation elongation. During this step, the ribosome changes from the pre-translocational (PRE) to the post-translocational (POST) state as the newly formed A-site-bound peptidyl-tRNA and P-site-bound deacylated tRNA move to the P and E sites, respectively. Catalyzes the coordinated movement of the two tRNA molecules, the mRNA and conformational changes in the ribosome. The protein is Elongation factor G (fusA) of Chlamydia muridarum (strain MoPn / Nigg).